Here is an 88-residue protein sequence, read N- to C-terminus: Alpha-latrotoxin-associated low molecular weight protein-2 (88 aa).

Positions 1-19 (MLKLICIAFLVTVLTLVAG) are cleaved as a signal peptide. Glutamine 20 is subject to Pyrrolidone carboxylic acid. 3 disulfide bridges follow: cysteine 30-cysteine 66, cysteine 46-cysteine 62, and cysteine 49-cysteine 75.

It belongs to the arthropod CHH/MIH/GIH/VIH hormone family. In terms of processing, the N-terminus is blocked. Expressed by the venom gland.

The protein localises to the secreted. Its function is as follows. May increase the toxicity of alpha-latrotoxin and/or other venom components. Is non-toxic to mice and to the cockroach Periplaneta americana. This is Alpha-latrotoxin-associated low molecular weight protein-2 from Latrodectus tredecimguttatus (Mediterranean black widow spider).